The following is a 288-amino-acid chain: Homoserine kinase (288 aa).

79–89 (PLARGLGSSSS) serves as a coordination point for ATP.

The protein belongs to the GHMP kinase family. Homoserine kinase subfamily.

It localises to the cytoplasm. It catalyses the reaction L-homoserine + ATP = O-phospho-L-homoserine + ADP + H(+). The protein operates within amino-acid biosynthesis; L-threonine biosynthesis; L-threonine from L-aspartate: step 4/5. Catalyzes the ATP-dependent phosphorylation of L-homoserine to L-homoserine phosphate. The sequence is that of Homoserine kinase from Streptococcus gordonii (strain Challis / ATCC 35105 / BCRC 15272 / CH1 / DL1 / V288).